The primary structure comprises 427 residues: Inward rectifier potassium channel 2 (427 aa).

The Cytoplasmic segment spans residues 1 to 81; that stretch reads MGSVRTNRYS…IFTTCVDIRW (81 aa). Residue C76 is modified to S-nitrosocysteine. A helical transmembrane segment spans residues 82–106; that stretch reads RWMLVIFCLAFVLSWLFFGCVFWLI. The Extracellular segment spans residues 107–128; that stretch reads ALLHGDLDASKESKACVSEVNS. The helical; Pore-forming intramembrane region spans 129 to 140; the sequence is FTAAFLFSIETQ. The segment at residues 141–147 is an intramembrane region (pore-forming); the sequence is TTIGYGF. Residues 142–147 carry the Selectivity filter motif; the sequence is TIGYGF. Residues 148-156 are Extracellular-facing; that stretch reads RCVTDECPV. A helical membrane pass occupies residues 157–178; the sequence is AVFMVVFQSIVGCIIDAFIIGA. At 179–427 the chain is on the cytoplasmic side; sequence VMAKMAKPKK…PRPLRRESEI (249 aa). The tract at residues 181–208 is polyphosphoinositide (PIP2)-binding; that stretch reads AKMAKPKKRNETLVFSHNAVIAMRDGKL. The disordered stretch occupies residues 384 to 427; that stretch reads SKEEDDSENGVPESTSTDTPPDLDLHNQASVPLEPRPLRRESEI. The short motif at 425–427 is the PDZ-binding element; it reads SEI.

Belongs to the inward rectifier-type potassium channel (TC 1.A.2.1) family. KCNJ2 subfamily. In terms of assembly, homotetramer. Homomultimeric and heteromultimeric association with KCNJ4/Kir2.3. Can form heteromeric channels with Kir2.6/KCNJ18. Associates, via its PDZ-recognition domain, with a complex containing LIN7A, LIN7B, LIN7C, DLG1, CASK and APBA1. Post-translationally, S-nitrosylation increases the open probability and inward rectifying currents.

It localises to the cell membrane. The protein localises to the sarcolemma. The protein resides in the T-tubule. It carries out the reaction K(+)(in) = K(+)(out). With respect to regulation, activated by phosphatidylinositol 4,5 biphosphate (PtdIns(4,5)P2). Its function is as follows. Inward rectifier potassium channels are characterized by a greater tendency to allow potassium to flow into the cell rather than out of it. Their voltage dependence is regulated by the concentration of extracellular potassium; as external potassium is raised, the voltage range of the channel opening shifts to more positive voltages. The inward rectification is mainly due to the blockage of outward current by internal magnesium. Blocked by external barium or cesium. Probably participates in establishing action potential waveform and excitability of neuronal and muscle tissues. This chain is Inward rectifier potassium channel 2 (KCNJ2), found in Canis lupus familiaris (Dog).